We begin with the raw amino-acid sequence, 373 residues long: PqqA peptide cyclase (373 aa).

In terms of domain architecture, Radical SAM core spans 9–224 (LTKPRWLLAE…QSYKEKVKGR (216 aa)). [4Fe-4S] cluster-binding residues include Cys23, Cys27, and Cys30.

The protein belongs to the radical SAM superfamily. PqqE family. Interacts with PqqD. The interaction is necessary for activity of PqqE. It depends on [4Fe-4S] cluster as a cofactor.

The catalysed reaction is [PQQ precursor protein] + S-adenosyl-L-methionine = E-Y cross-linked-[PQQ precursor protein] + 5'-deoxyadenosine + L-methionine + H(+). Its pathway is cofactor biosynthesis; pyrroloquinoline quinone biosynthesis. In terms of biological role, catalyzes the cross-linking of a glutamate residue and a tyrosine residue in the PqqA protein as part of the biosynthesis of pyrroloquinoline quinone (PQQ). This chain is PqqA peptide cyclase, found in Methylococcus capsulatus (strain ATCC 33009 / NCIMB 11132 / Bath).